The sequence spans 262 residues: 3-methyl-2-oxobutanoate hydroxymethyltransferase (262 aa).

Mg(2+)-binding residues include aspartate 44 and aspartate 83. 3-methyl-2-oxobutanoate-binding positions include 44–45 (DS), aspartate 83, and lysine 112. Glutamate 114 contacts Mg(2+). Residue glutamate 177 is the Proton acceptor of the active site.

It belongs to the PanB family. As to quaternary structure, homodecamer; pentamer of dimers. Mg(2+) serves as cofactor.

It is found in the cytoplasm. It carries out the reaction 3-methyl-2-oxobutanoate + (6R)-5,10-methylene-5,6,7,8-tetrahydrofolate + H2O = 2-dehydropantoate + (6S)-5,6,7,8-tetrahydrofolate. It functions in the pathway cofactor biosynthesis; coenzyme A biosynthesis. Its function is as follows. Catalyzes the reversible reaction in which hydroxymethyl group from 5,10-methylenetetrahydrofolate is transferred onto alpha-ketoisovalerate to form ketopantoate. The protein is 3-methyl-2-oxobutanoate hydroxymethyltransferase of Metallosphaera sedula (strain ATCC 51363 / DSM 5348 / JCM 9185 / NBRC 15509 / TH2).